Reading from the N-terminus, the 534-residue chain is Inosine-5'-monophosphate dehydrogenase (534 aa).

2 CBS domains span residues 117 to 181 (YVMQ…GTPI) and 190 to 255 (TTPI…PMAS). NAD(+) contacts are provided by residues 292 to 294 (DSS) and 342 to 344 (GMG). Positions 344 and 346 each coordinate K(+). Ser-347 provides a ligand contact to IMP. Cys-349 contacts K(+). The active-site Thioimidate intermediate is the Cys-349. Residues 382-384 (DGG), 405-406 (GG), and 430-434 (YRGMG) contribute to the IMP site. The active-site Proton acceptor is Arg-448. Gln-461 is an IMP binding site. Glu-520, Gly-521, and Gly-522 together coordinate K(+).

The protein belongs to the IMPDH/GMPR family. Homotetramer. The cofactor is K(+).

The protein resides in the cytoplasm. It carries out the reaction IMP + NAD(+) + H2O = XMP + NADH + H(+). Its pathway is purine metabolism; XMP biosynthesis via de novo pathway; XMP from IMP: step 1/1. Mycophenolic acid (MPA) is a non-competitive inhibitor that prevents formation of the closed enzyme conformation by binding to the same site as the amobile flap. In contrast, mizoribine monophosphate (MZP) is a competitive inhibitor that induces the closed conformation. MPA is a potent inhibitor of mammalian IMPDHs but a poor inhibitor of the bacterial enzymes. MZP is a more potent inhibitor of bacterial IMPDH. In terms of biological role, catalyzes the conversion of inosine 5'-phosphate (IMP) to xanthosine 5'-phosphate (XMP), the first committed and rate-limiting step in the de novo synthesis of guanine nucleotides, and therefore plays an important role in the regulation of cell growth. This is Inosine-5'-monophosphate dehydrogenase from Caenorhabditis elegans.